The following is a 31-amino-acid chain: Fibrinogen beta chain (31 aa).

A compositionally biased stretch (acidic residues) spans 1–10; sequence HYYDDTDEEE. Residues 1 to 31 form a disordered region; it reads HYYDDTDEEERIVSTVDARGHRPLDKKREEA. Tyr2 carries the post-translational modification Sulfotyrosine; partial. Position 3 is a sulfotyrosine (Tyr3). Residues 18-31 are compositionally biased toward basic and acidic residues; it reads ARGHRPLDKKREEA.

As to quaternary structure, heterohexamer; disulfide linked. Contains 2 sets of 3 non-identical chains (alpha, beta and gamma). The 2 heterotrimers are in head to head conformation with the N-termini in a small central domain. Post-translationally, conversion of fibrinogen to fibrin is triggered by thrombin, which cleaves fibrinopeptides A and B from alpha and beta chains, and thus exposes the N-terminal polymerization sites responsible for the formation of the soft clot.

The protein resides in the secreted. Functionally, cleaved by the protease thrombin to yield monomers which, together with fibrinogen alpha (FGA) and fibrinogen gamma (FGG), polymerize to form an insoluble fibrin matrix. Fibrin has a major function in hemostasis as one of the primary components of blood clots. In addition, functions during the early stages of wound repair to stabilize the lesion and guide cell migration during re-epithelialization. Was originally thought to be essential for platelet aggregation, based on in vitro studies using anticoagulated blood. However subsequent studies have shown that it is not absolutely required for thrombus formation in vivo. Enhances expression of SELP in activated platelets. Maternal fibrinogen is essential for successful pregnancy. Fibrin deposition is also associated with infection, where it protects against IFNG-mediated hemorrhage. May also facilitate the antibacterial immune response via both innate and T-cell mediated pathways. The protein is Fibrinogen beta chain (FGB) of Canis lupus familiaris (Dog).